The chain runs to 305 residues: tRNA-cytidine(32) 2-sulfurtransferase (305 aa).

The segment at 1 to 20 is disordered; sequence MTAVLPLPQPLADPAPRDPR. Residues 59–64 carry the PP-loop motif motif; it reads SGGKDS. Positions 134, 137, and 225 each coordinate [4Fe-4S] cluster. Positions 282-305 are disordered; sequence DAPSGLDPDPRAWLSAGHATHDSD.

It belongs to the TtcA family. As to quaternary structure, homodimer. Mg(2+) is required as a cofactor. The cofactor is [4Fe-4S] cluster.

It localises to the cytoplasm. It catalyses the reaction cytidine(32) in tRNA + S-sulfanyl-L-cysteinyl-[cysteine desulfurase] + AH2 + ATP = 2-thiocytidine(32) in tRNA + L-cysteinyl-[cysteine desulfurase] + A + AMP + diphosphate + H(+). It participates in tRNA modification. Its function is as follows. Catalyzes the ATP-dependent 2-thiolation of cytidine in position 32 of tRNA, to form 2-thiocytidine (s(2)C32). The sulfur atoms are provided by the cysteine/cysteine desulfurase (IscS) system. The protein is tRNA-cytidine(32) 2-sulfurtransferase of Xanthomonas axonopodis pv. citri (strain 306).